A 179-amino-acid chain; its full sequence is Large ribosomal subunit protein uL5 (179 aa).

The protein belongs to the universal ribosomal protein uL5 family. Part of the 50S ribosomal subunit; part of the 5S rRNA/L5/L18/L25 subcomplex. Contacts the 5S rRNA and the P site tRNA. Forms a bridge to the 30S subunit in the 70S ribosome.

Functionally, this is one of the proteins that bind and probably mediate the attachment of the 5S RNA into the large ribosomal subunit, where it forms part of the central protuberance. In the 70S ribosome it contacts protein S13 of the 30S subunit (bridge B1b), connecting the 2 subunits; this bridge is implicated in subunit movement. Contacts the P site tRNA; the 5S rRNA and some of its associated proteins might help stabilize positioning of ribosome-bound tRNAs. In Verminephrobacter eiseniae (strain EF01-2), this protein is Large ribosomal subunit protein uL5.